The following is a 457-amino-acid chain: Aromatic amino acid permease FywP (457 aa).

Transmembrane regions (helical) follow at residues 16–36 (IVML…SGKV), 43–63 (SVLL…YGVG), 91–111 (FADW…EAGV), 114–134 (FLAI…VAVL), 154–174 (AFIK…LLVI), 205–225 (GFLT…LAAI), 243–263 (GVLI…LHLL), 292–312 (IVLV…IYAT), 342–362 (NAIL…AVLG), 373–393 (ISFT…VLYF), 403–423 (VKLA…MQII), and 424–444 (TNPW…YFSY).

The protein belongs to the amino acid-polyamine-organocation (APC) superfamily. Amino acid transporter (AAT) (TC 2.A.3.1) family.

It is found in the cell membrane. Functionally, involved in phenylalanine and tyrosine uptake. Also has affinity for tryptophan. Plays no significant role in the excretion of accumulated phenylalanine. The sequence is that of Aromatic amino acid permease FywP from Lactococcus lactis subsp. cremoris (strain MG1363).